A 116-amino-acid polypeptide reads, in one-letter code: Insulin (116 aa).

A signal peptide spans 1–24; the sequence is MAALWLQSFSLLVLLVVSWPGSQA. Disulfide bonds link cysteine 32–cysteine 102, cysteine 44–cysteine 115, and cysteine 101–cysteine 106. A propeptide spans 56–93 (c peptide); sequence DVDQLLGFLPPKSGGAAAAGADNEVAEFAFKDQMEMMV.

Belongs to the insulin family. As to quaternary structure, heterodimer of a B chain and an A chain linked by two disulfide bonds.

The protein localises to the secreted. In terms of biological role, insulin decreases blood glucose concentration. It increases cell permeability to monosaccharides, amino acids and fatty acids. It accelerates glycolysis, the pentose phosphate cycle, and glycogen synthesis in liver. The sequence is that of Insulin (ins) from Lophius americanus (American angler).